We begin with the raw amino-acid sequence, 140 residues long: Heavy metal-associated isoprenylated plant protein 31 (140 aa).

The region spanning 3–67 is the HMA domain; the sequence is MTVEIRVPNL…AVRRAGKAAE (65 aa). The a metal cation site is built by Cys-14 and Cys-17. Cys-137 bears the Cysteine methyl ester mark. Cys-137 carries the S-farnesyl cysteine lipid modification. Residues 138–140 constitute a propeptide, removed in mature form; sequence TIM.

It belongs to the HIPP family.

Functionally, heavy-metal-binding protein. This is Heavy metal-associated isoprenylated plant protein 31 from Arabidopsis thaliana (Mouse-ear cress).